Here is a 101-residue protein sequence, read N- to C-terminus: uncharacterized protein (101 aa).

The signal sequence occupies residues 1 to 27; it reads MQLTGSIYPWFTAYALLKSTLMELINS. Transmembrane regions (helical) follow at residues 42 to 64 and 79 to 98; these read LVPY…AISF and TFVF…NTFL.

The protein resides in the cytoplasm. It is found in the nucleus membrane. This is an uncharacterized protein from Schizosaccharomyces pombe (strain 972 / ATCC 24843) (Fission yeast).